We begin with the raw amino-acid sequence, 411 residues long: DNA polymerase IV (411 aa).

The UmuC domain occupies V18–G211. The Mg(2+) site is built by D22 and D130. E131 is an active-site residue. 2 disordered regions span residues F248–E280 and G376–T411. A compositionally biased stretch (basic and acidic residues) spans R253–S274. Gly residues predominate over residues D384–G402.

Belongs to the DNA polymerase type-Y family. In terms of assembly, monomer. The cofactor is Mg(2+).

Its subcellular location is the cytoplasm. The catalysed reaction is DNA(n) + a 2'-deoxyribonucleoside 5'-triphosphate = DNA(n+1) + diphosphate. In terms of biological role, poorly processive, error-prone DNA polymerase involved in untargeted mutagenesis. Copies undamaged DNA at stalled replication forks, which arise in vivo from mismatched or misaligned primer ends. These misaligned primers can be extended by PolIV. Exhibits no 3'-5' exonuclease (proofreading) activity. May be involved in translesional synthesis. The polypeptide is DNA polymerase IV (Halobacterium salinarum (strain ATCC 29341 / DSM 671 / R1)).